The chain runs to 158 residues: Endoribonuclease YbeY (158 aa).

Zn(2+) contacts are provided by H118, H122, and H128.

It belongs to the endoribonuclease YbeY family. It depends on Zn(2+) as a cofactor.

It localises to the cytoplasm. Single strand-specific metallo-endoribonuclease involved in late-stage 70S ribosome quality control and in maturation of the 3' terminus of the 16S rRNA. The protein is Endoribonuclease YbeY of Bartonella quintana (strain Toulouse) (Rochalimaea quintana).